The primary structure comprises 111 residues: Integration host factor subunit alpha (111 aa).

It belongs to the bacterial histone-like protein family. Heterodimer of an alpha and a beta chain.

In terms of biological role, this protein is one of the two subunits of integration host factor, a specific DNA-binding protein that functions in genetic recombination as well as in transcriptional and translational control. This Polaromonas sp. (strain JS666 / ATCC BAA-500) protein is Integration host factor subunit alpha.